Reading from the N-terminus, the 221-residue chain is Small ribosomal subunit protein uS5 (221 aa).

The S5 DRBM domain maps to 46 to 109 (LKDEVINIER…DNAKLNIIEI (64 aa)).

Belongs to the universal ribosomal protein uS5 family. As to quaternary structure, part of the 30S ribosomal subunit. Contacts protein S4.

Its function is as follows. With S4 and S12 plays an important role in translational accuracy. The chain is Small ribosomal subunit protein uS5 from Picrophilus torridus (strain ATCC 700027 / DSM 9790 / JCM 10055 / NBRC 100828 / KAW 2/3).